The chain runs to 472 residues: MFEVVIGLEVHAQLNTKTKIFCSCATSFGEAPNTNVCPTCLALPGALPVLNEEAVKKAIAFGKAVNATINKKSVFNRKNYFYPDLPKAYQISQFDIPIVEKGELFINVKGENKRIGITRAHLEEDAGKNIHESNFSKVDLNRAGTPLLEIVSEPELRSSDEAVAYLKKLHSIIRFLDISDANMQEGSFRCDANVSIRPKGDTKLYTRVEIKNLNSFRFIQKAIEYEVKRQSEAWEDGTYEQEVVQETRLFDTTNLVTRSMRGKEEAAEYRYFPDPDLLPVLLKDEFLDIKIPELPDEKKVRFIDKLGIKESDAEVLISSLEMSRFFESLISQNLNPKLCVNWLNTELMGLLKGELTIENSPVDAQKLGVLIKRIEDGTISAKAAKDVLAFVFENTSVEIDEAIEKLGLKQVSDDSAIEAVIEQILNANADKVAEYKSGKDKLFGFFVGQTMKEGKGAFNPAKVNEILKTKLG.

This sequence belongs to the GatB/GatE family. GatB subfamily. Heterotrimer of A, B and C subunits.

The enzyme catalyses L-glutamyl-tRNA(Gln) + L-glutamine + ATP + H2O = L-glutaminyl-tRNA(Gln) + L-glutamate + ADP + phosphate + H(+). It carries out the reaction L-aspartyl-tRNA(Asn) + L-glutamine + ATP + H2O = L-asparaginyl-tRNA(Asn) + L-glutamate + ADP + phosphate + 2 H(+). Allows the formation of correctly charged Asn-tRNA(Asn) or Gln-tRNA(Gln) through the transamidation of misacylated Asp-tRNA(Asn) or Glu-tRNA(Gln) in organisms which lack either or both of asparaginyl-tRNA or glutaminyl-tRNA synthetases. The reaction takes place in the presence of glutamine and ATP through an activated phospho-Asp-tRNA(Asn) or phospho-Glu-tRNA(Gln). The chain is Aspartyl/glutamyl-tRNA(Asn/Gln) amidotransferase subunit B from Campylobacter jejuni subsp. jejuni serotype O:2 (strain ATCC 700819 / NCTC 11168).